Consider the following 91-residue polypeptide: Small ribosomal subunit protein bS16 (91 aa).

This sequence belongs to the bacterial ribosomal protein bS16 family.

The sequence is that of Small ribosomal subunit protein bS16 from Exiguobacterium sp. (strain ATCC BAA-1283 / AT1b).